The chain runs to 203 residues: Small ribosomal subunit protein uS4 (203 aa).

The tract at residues 1–46 (MSKRQSAKYKLDRRMGENIWGRPKSPVNRREYGPGQHGQRRKGKMS) is disordered. Residues 94–157 (RRLDAVVYRA…QEMALVAEAQ (64 aa)) enclose the S4 RNA-binding domain.

This sequence belongs to the universal ribosomal protein uS4 family. In terms of assembly, part of the 30S ribosomal subunit. Contacts protein S5. The interaction surface between S4 and S5 is involved in control of translational fidelity.

One of the primary rRNA binding proteins, it binds directly to 16S rRNA where it nucleates assembly of the body of the 30S subunit. Functionally, with S5 and S12 plays an important role in translational accuracy. The sequence is that of Small ribosomal subunit protein uS4 from Sphingopyxis alaskensis (strain DSM 13593 / LMG 18877 / RB2256) (Sphingomonas alaskensis).